Here is a 213-residue protein sequence, read N- to C-terminus: High frequency lysogenization protein HflD homolog (213 aa).

A coiled-coil region spans residues 79–122 (QGLNAELTRYTLSLMVLERKLSSAKGALNTLGDRINGLQRQLDH).

The protein belongs to the HflD family.

The protein localises to the cytoplasm. It is found in the cell inner membrane. This Salmonella agona (strain SL483) protein is High frequency lysogenization protein HflD homolog.